We begin with the raw amino-acid sequence, 349 residues long: 11-beta-hydroxysteroid dehydrogenase 1A (349 aa).

Residues 10–30 (LTAPFFTFFGLCFFLPPFYFF) traverse the membrane as a helical; Signal-anchor for type II membrane protein segment. NADP(+) contacts are provided by residues 54–80 (GASS…TARR) and aspartate 105. Substrate is bound at residue serine 184. Residue tyrosine 197 is the Proton acceptor of the active site. NADP(+) is bound by residues 197 to 201 (YNASK) and lysine 201.

The protein belongs to the short-chain dehydrogenases/reductases (SDR) family. As to expression, expressed in the above-ground part of seedlings, especially in the vascular tissues. Also detected in the buds and silique pedicels. Highly induced in oil-accumulating tissues of maturing seeds.

The protein resides in the lipid droplet. The protein localises to the membrane. The catalysed reaction is an 11beta-hydroxysteroid + NADP(+) = an 11-oxosteroid + NADPH + H(+). The enzyme catalyses 17beta-estradiol + NADP(+) = estrone + NADPH + H(+). It catalyses the reaction corticosterone + NADP(+) = 11-dehydrocorticosterone + NADPH + H(+). It carries out the reaction cortisone + NADPH + H(+) = cortisol + NADP(+). In terms of biological role, catalyzes 11-beta, 17-beta-hydroxysteroid and reduces 17-beta-ketosteroids. Involved in regulating plant growth and development, probably promoting or mediating brassinosteroid effects. Plays a role during seed maturation. The protein is 11-beta-hydroxysteroid dehydrogenase 1A (HSD1) of Arabidopsis thaliana (Mouse-ear cress).